The following is a 125-amino-acid chain: Small ribosomal subunit protein eS8 (125 aa).

It belongs to the eukaryotic ribosomal protein eS8 family. In terms of assembly, part of the 30S ribosomal subunit.

This Methanosarcina mazei (strain ATCC BAA-159 / DSM 3647 / Goe1 / Go1 / JCM 11833 / OCM 88) (Methanosarcina frisia) protein is Small ribosomal subunit protein eS8.